We begin with the raw amino-acid sequence, 237 residues long: Ribonuclease PH (237 aa).

Phosphate is bound by residues Arg-86 and 124–126 (GTR).

The protein belongs to the RNase PH family. Homohexameric ring arranged as a trimer of dimers.

The catalysed reaction is tRNA(n+1) + phosphate = tRNA(n) + a ribonucleoside 5'-diphosphate. Phosphorolytic 3'-5' exoribonuclease that plays an important role in tRNA 3'-end maturation. Removes nucleotide residues following the 3'-CCA terminus of tRNAs; can also add nucleotides to the ends of RNA molecules by using nucleoside diphosphates as substrates, but this may not be physiologically important. Probably plays a role in initiation of 16S rRNA degradation (leading to ribosome degradation) during starvation. The protein is Ribonuclease PH of Myxococcus xanthus (strain DK1622).